The chain runs to 178 residues: Large ribosomal subunit protein bL17 (178 aa).

2 stretches are compositionally biased toward low complexity: residues 123–139 (KAPA…NTAT) and 151–160 (EDAAAQAPVA). Residues 123–178 (KAPASAADAKAQINTATEAKEAEPEAPAEDAAAQAPVADEQKAAEVDEKAEEKPEA) form a disordered region. Residues 161–178 (DEQKAAEVDEKAEEKPEA) are compositionally biased toward basic and acidic residues.

This sequence belongs to the bacterial ribosomal protein bL17 family. In terms of assembly, part of the 50S ribosomal subunit. Contacts protein L32.

In Cutibacterium acnes (strain DSM 16379 / KPA171202) (Propionibacterium acnes), this protein is Large ribosomal subunit protein bL17.